A 702-amino-acid chain; its full sequence is Vertnin (702 aa).

A disordered region spans residues 562-625 (VPTLGKGGQE…QGQPHSGPLL (64 aa)). A compositionally biased stretch (basic and acidic residues) spans 570–582 (QEAEEKQEKEAGR).

It belongs to the vertnin family.

The protein localises to the nucleus. Functionally, acts as a transcription factor that regulates development of thoracic vertebrae. This chain is Vertnin, found in Homo sapiens (Human).